The following is a 776-amino-acid chain: Ent-8-alpha-hydroxylabd-13-en-15-yl diphosphate synthase CPS4, chloroplastic (776 aa).

A chloroplast-targeting transit peptide spans 1–60 (MSFASNATGFRIPLTTCVYPSPILRFNAKVGSGSSYGTTEAQRNMKCVDGIGRSRVVAVA). Substrate is bound at residue Lys-226. Residues Asp-357 and Asp-359 each contribute to the Mg(2+) site. The DXDD motif signature appears at 357 to 360 (DSDD). Position 443 (Lys-443) interacts with substrate.

The protein belongs to the terpene synthase family. Requires Mg(2+) as cofactor.

It is found in the plastid. The protein localises to the chloroplast. The catalysed reaction is ent-8alpha-hydroxylabd-13-en-15-yl diphosphate = (2E,6E,10E)-geranylgeranyl diphosphate + H2O. It functions in the pathway secondary metabolite biosynthesis; terpenoid biosynthesis. Its function is as follows. Involved in diterpenoid biosynthesis. Catalyzes the conversion of all-trans-geranylgeranyl diphosphate to ent-8alpha-hydroxylabd-13-en-15-yl diphosphate. The chain is Ent-8-alpha-hydroxylabd-13-en-15-yl diphosphate synthase CPS4, chloroplastic from Salvia miltiorrhiza (Chinese sage).